Consider the following 491-residue polypeptide: Pentatricopeptide repeat-containing protein At5g27460 (491 aa).

PPR repeat units follow at residues 69–99 (SLSE…MENQ), 105–139 (SVYD…SVSM), 142–176 (AKSA…GFLV), 177–211 (TPHP…KIPR), 212–246 (NVLS…KSVE), 248–278 (GWSS…AEKM), 283–313 (NRLG…SKSV), 318–348 (SCVN…WEAQ), 353–387 (DVRV…GGTP), and 388–426 (NYKT…HWRP).

It belongs to the PPR family. P subfamily.

The sequence is that of Pentatricopeptide repeat-containing protein At5g27460 from Arabidopsis thaliana (Mouse-ear cress).